The sequence spans 152 residues: Nucleoside diphosphate kinase (152 aa).

Positions 11, 59, 87, 93, 104, and 114 each coordinate ATP. The active-site Pros-phosphohistidine intermediate is His-117.

It belongs to the NDK family. Homotetramer. Mg(2+) is required as a cofactor.

The protein localises to the cytoplasm. It catalyses the reaction a 2'-deoxyribonucleoside 5'-diphosphate + ATP = a 2'-deoxyribonucleoside 5'-triphosphate + ADP. The enzyme catalyses a ribonucleoside 5'-diphosphate + ATP = a ribonucleoside 5'-triphosphate + ADP. Major role in the synthesis of nucleoside triphosphates other than ATP. The ATP gamma phosphate is transferred to the NDP beta phosphate via a ping-pong mechanism, using a phosphorylated active-site intermediate. This Prochlorococcus marinus subsp. pastoris (strain CCMP1986 / NIES-2087 / MED4) protein is Nucleoside diphosphate kinase.